Here is a 761-residue protein sequence, read N- to C-terminus: Wall-associated receptor kinase-like 4 (761 aa).

The N-terminal stretch at 1 to 26 is a signal peptide; that stretch reads MKKETQNLQCIPLVISVLSLFGVSSA. The Extracellular segment spans residues 27–349; that stretch reads RKPPYLCNRV…EPKKPGQIKP (323 aa). Asparagine 64, asparagine 166, asparagine 206, asparagine 226, and asparagine 262 each carry an N-linked (GlcNAc...) asparagine glycan. The segment at 278–339 is atypical EGF-like; sequence CVCSYGYFSG…CVNKPGWFTC (62 aa). 3 cysteine pairs are disulfide-bonded: cysteine 280/cysteine 293, cysteine 316/cysteine 330, and cysteine 325/cysteine 339. The helical transmembrane segment at 350 to 370 threads the bilayer; it reads VFQGVLIGSALLLFAFGIFGL. The Cytoplasmic portion of the chain corresponds to 371 to 761; it reads YKFIKKQRRS…VEPLVPLRTW (391 aa). The 274-residue stretch at 424 to 697 folds into the Protein kinase domain; the sequence is FNTNRVLGQG…REVSVELERI (274 aa). ATP-binding positions include 430–438 and lysine 452; that span reads LGQGGQGTV. The residue at position 497 (tyrosine 497) is a Phosphotyrosine. Aspartate 549 (proton acceptor) is an active-site residue. Phosphothreonine is present on residues threonine 583 and threonine 588. Position 596 is a phosphotyrosine (tyrosine 596). The interval 701–761 is disordered; that stretch reads SYKSEIHNDD…VEPLVPLRTW (61 aa). Residues 708–732 show a composition bias toward acidic residues; that stretch reads NDDDDDDDDDDEDDQAMELNIEETW.

The protein belongs to the protein kinase superfamily. Ser/Thr protein kinase family. Expressed in the whole plant. Detected in root-shoot junctions and lateral root initiation sites.

The protein resides in the membrane. It catalyses the reaction L-seryl-[protein] + ATP = O-phospho-L-seryl-[protein] + ADP + H(+). The enzyme catalyses L-threonyl-[protein] + ATP = O-phospho-L-threonyl-[protein] + ADP + H(+). Functionally, serine/threonine-protein kinase that may function as a signaling receptor of extracellular matrix component. Plays a role in plant mineral nutrients response. This Arabidopsis thaliana (Mouse-ear cress) protein is Wall-associated receptor kinase-like 4 (WAKL4).